The following is a 596-amino-acid chain: uncharacterized protein (596 aa).

The tract at residues 1 to 31 (MSTSNDPVVSSHDPIKQEKEQETDLEAQVEH) is disordered. The Cytoplasmic segment spans residues 1 to 37 (MSTSNDPVVSSHDPIKQEKEQETDLEAQVEHKKRNER). The segment covering 13–22 (DPIKQEKEQE) has biased composition (basic and acidic residues). The helical transmembrane segment at 38 to 58 (GNAFVGFLILIFVYYLLRGGS) threads the bilayer. At 59–596 (NDNDKQEMSH…ILVSDSGEEA (538 aa)) the chain is on the lumenal side. The N-linked (GlcNAc...) asparagine glycan is linked to N118. H197 is a binding site for Zn(2+). D199 is a catalytic residue. D232 serves as a coordination point for Zn(2+). The active-site Proton acceptor is E266. Zn(2+) is bound by residues E267 and D295. N-linked (GlcNAc...) asparagine glycans are attached at residues N466, N541, and N555. H565 provides a ligand contact to Zn(2+).

This sequence belongs to the peptidase M20A family. Requires Zn(2+) as cofactor.

Its subcellular location is the vacuole membrane. This is an uncharacterized protein from Schizosaccharomyces pombe (strain 972 / ATCC 24843) (Fission yeast).